A 520-amino-acid polypeptide reads, in one-letter code: GMP synthase [glutamine-hydrolyzing] (520 aa).

A Glutamine amidotransferase type-1 domain is found at T9–D202. Residue C86 is the Nucleophile of the active site. Active-site residues include H176 and E178. In terms of domain architecture, GMPS ATP-PPase spans W203–R395. S230–S236 is an ATP binding site.

As to quaternary structure, homodimer.

It catalyses the reaction XMP + L-glutamine + ATP + H2O = GMP + L-glutamate + AMP + diphosphate + 2 H(+). Its pathway is purine metabolism; GMP biosynthesis; GMP from XMP (L-Gln route): step 1/1. Its function is as follows. Catalyzes the synthesis of GMP from XMP. The polypeptide is GMP synthase [glutamine-hydrolyzing] (Mesorhizobium japonicum (strain LMG 29417 / CECT 9101 / MAFF 303099) (Mesorhizobium loti (strain MAFF 303099))).